Here is a 642-residue protein sequence, read N- to C-terminus: Threonine--tRNA ligase (642 aa).

Positions 1-61 (MIKVTFPDGN…EHDGKLQLLT (61 aa)) constitute a TGS domain. The tract at residues 240–539 (DHRKIGKDLD…LIEEYKGSFP (300 aa)) is catalytic. Cysteine 334, histidine 385, and histidine 516 together coordinate Zn(2+).

Belongs to the class-II aminoacyl-tRNA synthetase family. Homodimer. Requires Zn(2+) as cofactor.

It localises to the cytoplasm. It catalyses the reaction tRNA(Thr) + L-threonine + ATP = L-threonyl-tRNA(Thr) + AMP + diphosphate + H(+). Its function is as follows. Catalyzes the attachment of threonine to tRNA(Thr) in a two-step reaction: L-threonine is first activated by ATP to form Thr-AMP and then transferred to the acceptor end of tRNA(Thr). Also edits incorrectly charged L-seryl-tRNA(Thr). The polypeptide is Threonine--tRNA ligase (Acholeplasma laidlawii (strain PG-8A)).